Consider the following 683-residue polypeptide: ATP-dependent zinc metalloprotease FtsH 2 (683 aa).

Residues 1-12 (MADQTSQNDNQN) show a composition bias toward polar residues. Residues 1-21 (MADQTSQNDNQNGSGLPGGGP) are disordered. The Cytoplasmic segment spans residues 1-28 (MADQTSQNDNQNGSGLPGGGPSGTGRGR). The helical transmembrane segment at 29 to 49 (LIIWVIAGTLLALWAYSYWGM) threads the bilayer. The Periplasmic segment spans residues 50–136 (GASGGERISY…VTKPESSFPW (87 aa)). The chain crosses the membrane as a helical span at residues 137–157 (GLVIMGLLPVLLLFGVGYIFL). Topologically, residues 158–683 (RRMQSQGQGL…ASGSADASGS (526 aa)) are cytoplasmic. 228–235 (GPPGTGKT) lines the ATP pocket. H450 contributes to the Zn(2+) binding site. E451 is an active-site residue. Zn(2+) contacts are provided by H454 and D526. Residues 627–683 (VNGDTDEIGHMPTTNGAAASEENGSADDHEPDEATVIEEDGESGEGRASGSADASGS) form a disordered region. Acidic residues predominate over residues 655–669 (HEPDEATVIEEDGES). Low complexity predominate over residues 672–683 (GRASGSADASGS).

The protein in the central section; belongs to the AAA ATPase family. This sequence in the C-terminal section; belongs to the peptidase M41 family. Homohexamer. The cofactor is Zn(2+).

The protein resides in the cell inner membrane. Functionally, acts as a processive, ATP-dependent zinc metallopeptidase for both cytoplasmic and membrane proteins. Plays a role in the quality control of integral membrane proteins. The polypeptide is ATP-dependent zinc metalloprotease FtsH 2 (Salinibacter ruber (strain M8)).